A 238-amino-acid chain; its full sequence is tRNA (guanine-N(1)-)-methyltransferase (238 aa).

Residues Gly-108 and 127 to 132 contribute to the S-adenosyl-L-methionine site; that span reads LGDFVL.

It belongs to the RNA methyltransferase TrmD family. Homodimer.

The protein localises to the cytoplasm. The enzyme catalyses guanosine(37) in tRNA + S-adenosyl-L-methionine = N(1)-methylguanosine(37) in tRNA + S-adenosyl-L-homocysteine + H(+). Functionally, specifically methylates guanosine-37 in various tRNAs. This is tRNA (guanine-N(1)-)-methyltransferase from Streptococcus uberis (strain ATCC BAA-854 / 0140J).